The chain runs to 1604 residues: Calmodulin-regulated spectrin-associated protein 1 (1604 aa).

Serine 216 is modified (phosphoserine). In terms of domain architecture, Calponin-homology (CH) spans 235–350 (PVDFARVVRY…FIAELFWWFE (116 aa)). Residues serine 390, serine 394, and serine 435 each carry the phosphoserine modification. The tract at residues 394–413 (SPAAMSPADLPPSTQPLTEG) is disordered. The interval 444–491 (RQKQQKVSQAEEIPDQRHRSNSLTRADGQPRGAAIAWPDKKNRPVSQP) is disordered. At threonine 531 the chain carries Phosphothreonine. 10 positions are modified to phosphoserine: serine 571, serine 574, serine 581, serine 593, serine 607, serine 647, serine 739, serine 745, serine 755, and serine 757. The interval 642–671 (MAKRPSEGSQPLVRKKVTGSHGSRDLNRTF) is disordered. A compositionally biased stretch (basic and acidic residues) spans 784 to 806 (EEESAKLQEDMKVKEHEDKDDAS). Disordered regions lie at residues 784–824 (EEES…SMSM) and 842–888 (LNSC…KDPA). Composition is skewed to low complexity over residues 813 to 824 (LSTTSQLSSMSM) and 847 to 858 (TKSSTSSSQKTT). Basic and acidic residues predominate over residues 874 to 886 (QKREQSPSRHSKD). The tract at residues 888–909 (ASLLASELVQLHMQLEEKRRAI) is sufficient for interaction with SPTBN1. Coiled coils occupy residues 890 to 926 (LLASELVQLHMQLEEKRRAIEAQKKKMEALSARQRLK) and 1026 to 1058 (DVNECDLSIEKLNETISTLQQAILKISQQQEQL). Residues 920-939 (SARQRLKLGKAAFLHVVKKG) form a sufficient for interaction with calmodulin region. Disordered stretches follow at residues 1085–1163 (FVEP…GELP), 1246–1271 (PDEDGEVVGHESSLELGGESDQKPGV), and 1298–1448 (RKAE…DRDW). Phosphoserine is present on serine 1090. The segment covering 1113-1124 (RPAELKVPKDRQ) has biased composition (basic and acidic residues). A compositionally biased stretch (polar residues) spans 1125 to 1137 (QGCSRSKTPTPSV). The residue at position 1154 (serine 1154) is a Phosphoserine. Basic and acidic residues-rich tracts occupy residues 1246 to 1258 (PDEDGEVVGHESS) and 1298 to 1348 (RKAE…EYLR). Residues 1286 to 1357 (AKKRAAFLLK…RRKQQQALEE (72 aa)) are a coiled coil. Over residues 1363–1374 (PKSKPKKPRPKS) the composition is skewed to basic residues. A compositionally biased stretch (polar residues) spans 1382 to 1394 (SDSGTKCSSTPDN). A compositionally biased stretch (low complexity) spans 1395 to 1412 (LSQTHSGSSLSLASAATT). Phosphoserine occurs at positions 1400 and 1429. The CKK domain occupies 1465–1599 (GPKLFKEPSS…QPKRPTVPKK (135 aa)). Tyrosine 1539 carries the phosphotyrosine modification.

This sequence belongs to the CAMSAP1 family. Interacts with spectrin via SPTBN1; the interaction is direct. Interacts with calmodulin; calcium-dependent it prevents interaction with spectrin. In brain, specifically expressed in astrocytes (at protein level).

The protein localises to the cytoplasm. The protein resides in the cytoskeleton. Its function is as follows. Key microtubule-organizing protein that specifically binds the minus-end of non-centrosomal microtubules and regulates their dynamics and organization. Specifically recognizes growing microtubule minus-ends and stabilizes microtubules. Acts on free microtubule minus-ends that are not capped by microtubule-nucleating proteins or other factors and protects microtubule minus-ends from depolymerization. In contrast to CAMSAP2 and CAMSAP3, tracks along the growing tips of minus-end microtubules without significantly affecting the polymerization rate: binds at the very tip of the microtubules minus-end and acts as a minus-end tracking protein (-TIP) that dissociates from microtubules after allowing tubulin incorporation. Through interaction with spectrin may regulate neurite outgrowth. This Rattus norvegicus (Rat) protein is Calmodulin-regulated spectrin-associated protein 1 (Camsap1).